The following is a 732-amino-acid chain: Non-structural protein 4 (732 aa).

Polar residues-rich tracts occupy residues 13-23 (KNKGIQQNQWH) and 31-56 (LSGQ…NSKS). Disordered regions lie at residues 13 to 74 (KNKG…NSAA) and 706 to 732 (LGRN…KQKE). The span at 719–732 (QVEEAENEEEKQKE) shows a compositional bias: acidic residues.

This is Non-structural protein 4 from Catharanthus roseus (Madagascar periwinkle).